A 557-amino-acid chain; its full sequence is Ribonuclease J 2 (557 aa).

Zn(2+) is bound by residues His-76, His-78, His-144, and Glu-166. Position 366 to 370 (366 to 370 (HASSH)) interacts with substrate.

This sequence belongs to the metallo-beta-lactamase superfamily. RNA-metabolizing metallo-beta-lactamase-like family. Bacterial RNase J subfamily. In terms of assembly, homodimer, may be a subunit of the RNA degradosome. Requires Zn(2+) as cofactor.

It localises to the cytoplasm. Functionally, an RNase that has 5'-3' exonuclease and possibly endoonuclease activity. Involved in maturation of rRNA and in some organisms also mRNA maturation and/or decay. The protein is Ribonuclease J 2 of Staphylococcus aureus (strain MRSA252).